Consider the following 275-residue polypeptide: Diaminopimelate epimerase (275 aa).

The substrate site is built by Asn12, Gln45, and Asn65. Cys74 (proton donor) is an active-site residue. Substrate contacts are provided by residues 75-76 (GN), Asn158, Asn191, and 209-210 (ER). Cys218 serves as the catalytic Proton acceptor. 219 to 220 (GT) is a binding site for substrate.

This sequence belongs to the diaminopimelate epimerase family. Homodimer.

The protein resides in the cytoplasm. The enzyme catalyses (2S,6S)-2,6-diaminopimelate = meso-2,6-diaminopimelate. Its pathway is amino-acid biosynthesis; L-lysine biosynthesis via DAP pathway; DL-2,6-diaminopimelate from LL-2,6-diaminopimelate: step 1/1. Catalyzes the stereoinversion of LL-2,6-diaminopimelate (L,L-DAP) to meso-diaminopimelate (meso-DAP), a precursor of L-lysine and an essential component of the bacterial peptidoglycan. The sequence is that of Diaminopimelate epimerase from Shewanella baltica (strain OS223).